We begin with the raw amino-acid sequence, 268 residues long: uncharacterized protein (268 aa).

The N-terminal stretch at 1–18 (MRGFLLLSLGVFSFSALA) is a signal peptide. Domain stretches follow at residues 24 to 184 (SHDL…ELLP) and 185 to 268 (SPAT…NWLR). A disulfide bridge links C110 with C115.

In terms of assembly, monomer.

The protein resides in the periplasm. This is an uncharacterized protein from Pseudomonas aeruginosa (strain ATCC 15692 / DSM 22644 / CIP 104116 / JCM 14847 / LMG 12228 / 1C / PRS 101 / PAO1).